The following is a 400-amino-acid chain: MIIKPRVRGFICVTTHPVGCEANVKEQIDYVTSHGPIANGPKKVLVIGASTGYGLAARISAAFGAGADTLGVFFERPGSETKPGTAGWYNSAAFERFATEKGLYARSINGDAFSDQVKQVTIDTIKQDLGKVDLVVYSLAAPRRTHPKTGETISSTLKPIGKTVTFRGIDTDKEVIRETVLEPATQEEIDGTVAVMGGEDWQMWIDALDEAGVLADGAKTTAFTYLGEQITHDIYWNGSIGEAKKDLDKKVLSIRDKLAAHGGDARVSVLKAVVTQASSAIPMMPLYLSLLFKVMKEAGTHEGCIEQVYGLFKDSLYGATPHLDDEGRLRADYKELDPQIQKKVVELWDQVTNENLYELTDFAGYKTDFLRLFGFEIAGVDYDADVNPDVKIPRIIDTTV.

NAD(+) is bound by residues 48–53 (GASTGY), 74–75 (FE), 111–112 (DA), and 139–140 (LA). Y225 serves as a coordination point for substrate. Residue Y235 is the Proton donor of the active site. NAD(+) contacts are provided by residues K244 and 273–275 (VVT).

The protein belongs to the TER reductase family. As to quaternary structure, monomer.

It catalyses the reaction a 2,3-saturated acyl-[ACP] + NAD(+) = a (2E)-enoyl-[ACP] + NADH + H(+). The protein operates within lipid metabolism; fatty acid biosynthesis. In terms of biological role, involved in the final reduction of the elongation cycle of fatty acid synthesis (FAS II). Catalyzes the reduction of a carbon-carbon double bond in an enoyl moiety that is covalently linked to an acyl carrier protein (ACP). This chain is Enoyl-[acyl-carrier-protein] reductase [NADH], found in Burkholderia multivorans (strain ATCC 17616 / 249).